The sequence spans 282 residues: 2-dehydro-3-deoxyphosphooctonate aldolase (282 aa).

Belongs to the KdsA family.

The protein resides in the cytoplasm. The catalysed reaction is D-arabinose 5-phosphate + phosphoenolpyruvate + H2O = 3-deoxy-alpha-D-manno-2-octulosonate-8-phosphate + phosphate. Its pathway is carbohydrate biosynthesis; 3-deoxy-D-manno-octulosonate biosynthesis; 3-deoxy-D-manno-octulosonate from D-ribulose 5-phosphate: step 2/3. It participates in bacterial outer membrane biogenesis; lipopolysaccharide biosynthesis. This chain is 2-dehydro-3-deoxyphosphooctonate aldolase, found in Chromobacterium violaceum (strain ATCC 12472 / DSM 30191 / JCM 1249 / CCUG 213 / NBRC 12614 / NCIMB 9131 / NCTC 9757 / MK).